The primary structure comprises 666 residues: DNA-directed RNA polymerase III subunit rpc3 (666 aa).

Disordered stretches follow at residues 130–153 (HEPH…VHSY) and 375–455 (SRLD…TESR). The span at 135–153 (NGNSNETNGATNGNGVHSY) shows a compositional bias: polar residues. The interval 593 to 614 (TYKAMSRCLQRLDVEKRRKANI) is leucine-zipper.

Belongs to the RNA polymerase beta chain family. In terms of assembly, component of the RNA polymerase III (Pol III) complex consisting of 17 subunits.

Its subcellular location is the nucleus. In terms of biological role, DNA-dependent RNA polymerase catalyzes the transcription of DNA into RNA using the four ribonucleoside triphosphates as substrates. Specific core component of RNA polymerase III which synthesizes small RNAs, such as 5S rRNA and tRNAs. In Botryotinia fuckeliana (strain B05.10) (Noble rot fungus), this protein is DNA-directed RNA polymerase III subunit rpc3 (rpc82).